The sequence spans 1255 residues: RNA-directed RNA polymerase (1255 aa).

The 209-residue stretch at 548 to 756 (LIPLGLSPYA…QQRVSCGTFV (209 aa)) folds into the RdRp catalytic domain.

It localises to the virion. The catalysed reaction is RNA(n) + a ribonucleoside 5'-triphosphate = RNA(n+1) + diphosphate. In terms of biological role, RNA-directed RNA polymerase that is involved in transcription and genome replication. Following infection, it catalyzes the synthesis of fully conservative plus strands. After core assembly, which consists in recruitment of one capped plus-strand for each genomic segments and polymerase complexes, the polymerase switches mode and catalyzes the synthesis of complementary minus-strands. The polypeptide is RNA-directed RNA polymerase (Oryza latifolia (Indian wild rice)).